A 472-amino-acid polypeptide reads, in one-letter code: UDP-glycosyltransferase 2 (472 aa).

UDP-alpha-D-glucose contacts are provided by residues serine 283, 348–349 (WA), 366–374 (HCGWNSVLE), and 388–391 (YAEQ).

This sequence belongs to the UDP-glycosyltransferase family. In terms of tissue distribution, highly expressed in roots. Expressed in leaves and stems.

Functionally, glycosyltransferase that possesses isoflavonoids 4'-O- and 7-O-glucosyltransferase activities. Shows a successive glucosylation toward the acceptors producing their corresponding 4',7-O-diglucosides. Can use genistein, formononetin, daidzein, liquiritigenin and naringenin as substrates. Also shows a 3'-O-glucosylation activity in vitro. This chain is UDP-glycosyltransferase 2, found in Pueraria montana var. lobata (Kudzu vine).